Consider the following 498-residue polypeptide: Glycerol kinase (498 aa).

T12 serves as a coordination point for ADP. Residues T12, T13, and S14 each coordinate ATP. Sn-glycerol 3-phosphate is bound at residue T12. An ADP-binding site is contributed by R16. R82, E83, Y135, and D245 together coordinate sn-glycerol 3-phosphate. Residues R82, E83, Y135, D245, and Q246 each contribute to the glycerol site. 2 residues coordinate ADP: T267 and G310. Residues T267, G310, Q314, and G411 each coordinate ATP. Residues G411 and N415 each coordinate ADP.

It belongs to the FGGY kinase family. In terms of assembly, homotetramer and homodimer (in equilibrium).

It carries out the reaction glycerol + ATP = sn-glycerol 3-phosphate + ADP + H(+). Its pathway is polyol metabolism; glycerol degradation via glycerol kinase pathway; sn-glycerol 3-phosphate from glycerol: step 1/1. With respect to regulation, activated by phosphorylation and inhibited by fructose 1,6-bisphosphate (FBP). Key enzyme in the regulation of glycerol uptake and metabolism. Catalyzes the phosphorylation of glycerol to yield sn-glycerol 3-phosphate. The polypeptide is Glycerol kinase (Clostridium botulinum (strain Eklund 17B / Type B)).